The chain runs to 341 residues: Type II methyltransferase M.NgoPII (341 aa).

An SAM-dependent MTase C5-type domain is found at 12–341 (MKIISLFSGC…AAAIKKTLER (330 aa)). Cys-84 is a catalytic residue.

It belongs to the class I-like SAM-binding methyltransferase superfamily. C5-methyltransferase family.

It carries out the reaction a 2'-deoxycytidine in DNA + S-adenosyl-L-methionine = a 5-methyl-2'-deoxycytidine in DNA + S-adenosyl-L-homocysteine + H(+). Its function is as follows. A methylase that recognizes the double-stranded sequence 5'-GGCC-3', methylates C-3 on both strands, and protects the DNA from cleavage by the NgoPII endonuclease. The polypeptide is Type II methyltransferase M.NgoPII (ngoPIIM) (Neisseria gonorrhoeae).